The primary structure comprises 87 residues: Exodeoxyribonuclease 7 small subunit (87 aa).

This sequence belongs to the XseB family. As to quaternary structure, heterooligomer composed of large and small subunits.

The protein localises to the cytoplasm. It carries out the reaction Exonucleolytic cleavage in either 5'- to 3'- or 3'- to 5'-direction to yield nucleoside 5'-phosphates.. Its function is as follows. Bidirectionally degrades single-stranded DNA into large acid-insoluble oligonucleotides, which are then degraded further into small acid-soluble oligonucleotides. This chain is Exodeoxyribonuclease 7 small subunit, found in Xanthomonas campestris pv. campestris (strain 8004).